Consider the following 443-residue polypeptide: ATP synthase subunit b-delta (443 aa).

The interval 1 to 168 (MSTFIGQLIG…PSDAALDDAV (168 aa)) is ATP synthase subunit b. A helical membrane pass occupies residues 4 to 24 (FIGQLIGFAVIVFLLVRFVVP). Positions 169–443 (GSRMRSTSRE…LASAETQLPD (275 aa)) are ATP synthase subunit delta.

This sequence in the N-terminal section; belongs to the ATPase B chain family. In the C-terminal section; belongs to the ATPase delta chain family. In terms of assembly, F-type ATPases have 2 components, F(1) - the catalytic core - and F(0) - the membrane proton channel. F(1) has five subunits: alpha(3), beta(3), gamma(1), delta(1), epsilon(1). F(0) has three main subunits: a(1), b(2) and c(10-14). The alpha and beta chains form an alternating ring which encloses part of the gamma chain. F(1) is attached to F(0) by a central stalk formed by the gamma and epsilon chains, while a peripheral stalk is formed by the delta and b chains.

The protein resides in the cell membrane. Functionally, f(1)F(0) ATP synthase produces ATP from ADP in the presence of a proton or sodium gradient. F-type ATPases consist of two structural domains, F(1) containing the extramembraneous catalytic core and F(0) containing the membrane proton channel, linked together by a central stalk and a peripheral stalk. During catalysis, ATP synthesis in the catalytic domain of F(1) is coupled via a rotary mechanism of the central stalk subunits to proton translocation. This fusion protein includes a component of the F(0) channel (subunit b) and of the F(1) subunit (subunit delta). Two copies of subunit b and one of delta together form the peripheral 'stator' stalk which links F(1) to F(0). The sequence is that of ATP synthase subunit b-delta (atpFH) from Mycobacterium sp. (strain JLS).